Reading from the N-terminus, the 364-residue chain is 4-hydroxythreonine-4-phosphate dehydrogenase (364 aa).

Substrate-binding residues include histidine 148 and threonine 149. A divalent metal cation is bound by residues histidine 177, histidine 216, and histidine 301. Substrate contacts are provided by lysine 309, asparagine 318, and arginine 327.

The protein belongs to the PdxA family. As to quaternary structure, homodimer. It depends on Zn(2+) as a cofactor. Requires Mg(2+) as cofactor. Co(2+) serves as cofactor.

The protein resides in the cytoplasm. The enzyme catalyses 4-(phosphooxy)-L-threonine + NAD(+) = 3-amino-2-oxopropyl phosphate + CO2 + NADH. The protein operates within cofactor biosynthesis; pyridoxine 5'-phosphate biosynthesis; pyridoxine 5'-phosphate from D-erythrose 4-phosphate: step 4/5. In terms of biological role, catalyzes the NAD(P)-dependent oxidation of 4-(phosphooxy)-L-threonine (HTP) into 2-amino-3-oxo-4-(phosphooxy)butyric acid which spontaneously decarboxylates to form 3-amino-2-oxopropyl phosphate (AHAP). The chain is 4-hydroxythreonine-4-phosphate dehydrogenase from Campylobacter jejuni subsp. jejuni serotype O:2 (strain ATCC 700819 / NCTC 11168).